Reading from the N-terminus, the 59-residue chain is Large ribosomal subunit protein uL30 (59 aa).

Belongs to the universal ribosomal protein uL30 family. As to quaternary structure, part of the 50S ribosomal subunit.

This chain is Large ribosomal subunit protein uL30, found in Actinobacillus pleuropneumoniae serotype 7 (strain AP76).